A 149-amino-acid chain; its full sequence is 3-dehydroquinate dehydratase 2 (149 aa).

Catalysis depends on Y24, which acts as the Proton acceptor. N75, H81, and D88 together coordinate substrate. The active-site Proton donor is the H101. Residues 102 to 103 (LS) and R112 each bind substrate.

Belongs to the type-II 3-dehydroquinase family. Homododecamer.

It carries out the reaction 3-dehydroquinate = 3-dehydroshikimate + H2O. It functions in the pathway metabolic intermediate biosynthesis; chorismate biosynthesis; chorismate from D-erythrose 4-phosphate and phosphoenolpyruvate: step 3/7. Functionally, catalyzes a trans-dehydration via an enolate intermediate. The chain is 3-dehydroquinate dehydratase 2 (aroQ2) from Pseudomonas putida (strain ATCC 47054 / DSM 6125 / CFBP 8728 / NCIMB 11950 / KT2440).